Reading from the N-terminus, the 688-residue chain is DNA-directed RNA polymerase subunit beta' (688 aa).

Zn(2+) contacts are provided by C69, C71, C87, and C90. 3 residues coordinate Mg(2+): D489, D491, and D493.

The protein belongs to the RNA polymerase beta' chain family. RpoC1 subfamily. In plastids the minimal PEP RNA polymerase catalytic core is composed of four subunits: alpha, beta, beta', and beta''. When a (nuclear-encoded) sigma factor is associated with the core the holoenzyme is formed, which can initiate transcription. Mg(2+) serves as cofactor. It depends on Zn(2+) as a cofactor.

The protein resides in the plastid. Its subcellular location is the chloroplast. The enzyme catalyses RNA(n) + a ribonucleoside 5'-triphosphate = RNA(n+1) + diphosphate. DNA-dependent RNA polymerase catalyzes the transcription of DNA into RNA using the four ribonucleoside triphosphates as substrates. The chain is DNA-directed RNA polymerase subunit beta' from Piper cenocladum (Ant piper).